The primary structure comprises 255 residues: Sec-independent protein translocase protein TatC (255 aa).

The next 7 helical transmembrane spans lie at 28-48, 56-76, 80-100, 121-141, 165-185, 195-212, and 216-236; these read VAAVLLIFAALFYFAQDIYAL, YLPEGATMIATGVASPFLAPF, LMISLFLAMPVVLHQVWGFIA, LFYAGMAFAYFVVFPIMFGFF, LFFAFGVAFEVPVATFLLIWV, NSRPYVIVGCFVVGMVLT, and VFSQTLLAVPMWLLFEIGVFF.

The protein belongs to the TatC family. The Tat system comprises two distinct complexes: a TatABC complex, containing multiple copies of TatA, TatB and TatC subunits, and a separate TatA complex, containing only TatA subunits. Substrates initially bind to the TatABC complex, which probably triggers association of the separate TatA complex to form the active translocon.

It localises to the cell membrane. Part of the twin-arginine translocation (Tat) system that transports large folded proteins containing a characteristic twin-arginine motif in their signal peptide across membranes. Together with TatB, TatC is part of a receptor directly interacting with Tat signal peptides. The chain is Sec-independent protein translocase protein TatC from Azotobacter chroococcum mcd 1.